Reading from the N-terminus, the 198-residue chain is Peroxiredoxin-2 (198 aa).

A2 bears the N-acetylalanine mark. One can recognise a Thioredoxin domain in the interval 6 to 164 (AQIGKSAPDF…ALRLVQAFQY (159 aa)). Residue S11 is modified to Phosphoserine. Residue C51 is the Cysteine sulfenic acid (-SOH) intermediate of the active site. S112 is subject to Phosphoserine. T182 carries the post-translational modification Phosphothreonine. N6-acetyllysine is present on K196.

It belongs to the peroxiredoxin family. AhpC/Prx1 subfamily. Homodimer; disulfide-linked, upon oxidation. 5 homodimers assemble to form a ring-like decamer. Interacts with TIPIN. In terms of processing, the enzyme can be inactivated by further oxidation of the cysteine sulfenic acid (C(P)-SOH) to sulphinic acid (C(P)-SO2H) instead of its condensation to a disulfide bond. It can be reactivated by forming a transient disulfide bond with sulfiredoxin SRXN1, which reduces the cysteine sulfinic acid in an ATP- and Mg-dependent manner. Post-translationally, acetylation increases resistance to transition to high molecular-mass complexes. Deacetylated by HDAC6 which decreases reducing activity. In terms of tissue distribution, widely expressed with highest levels in bone marrow. High levels also found in heart, brain, kidney and skeletal muscle. Lower levels in liver, lung and thymus.

It is found in the cytoplasm. The catalysed reaction is a hydroperoxide + [thioredoxin]-dithiol = an alcohol + [thioredoxin]-disulfide + H2O. In terms of biological role, thiol-specific peroxidase that catalyzes the reduction of hydrogen peroxide and organic hydroperoxides to water and alcohols, respectively. Plays a role in cell protection against oxidative stress by detoxifying peroxides and as sensor of hydrogen peroxide-mediated signaling events. Might participate in the signaling cascades of growth factors and tumor necrosis factor-alpha by regulating the intracellular concentrations of H(2)O(2). The protein is Peroxiredoxin-2 (Prdx2) of Mus musculus (Mouse).